We begin with the raw amino-acid sequence, 187 residues long: Flavin prenyltransferase UbiX (187 aa).

Residues 9-11, S34, and R123 contribute to the FMN site; that span reads GAS. The dimethylallyl phosphate site is built by Y153 and K169.

Belongs to the UbiX/PAD1 family.

It carries out the reaction dimethylallyl phosphate + FMNH2 = prenylated FMNH2 + phosphate. Functionally, flavin prenyltransferase that catalyzes the synthesis of the prenylated FMN cofactor (prenyl-FMN) for 4-hydroxy-3-polyprenylbenzoic acid decarboxylase UbiD. The prenyltransferase is metal-independent and links a dimethylallyl moiety from dimethylallyl monophosphate (DMAP) to the flavin N5 and C6 atoms of FMN. The polypeptide is Flavin prenyltransferase UbiX (Helicobacter pylori (strain ATCC 700392 / 26695) (Campylobacter pylori)).